The sequence spans 281 residues: Rhomboid protease AarA (281 aa).

7 consecutive transmembrane segments (helical) span residues 16-36 (FSLG…AVYF), 76-96 (MLHS…VIGI), 105-125 (FKLL…SAYW), 145-165 (IGVG…IYLI), 185-205 (QLYN…QSGV), 208-228 (AAHI…ILVP), and 233-253 (VANL…IYLY). Catalysis depends on serine 150, which acts as the Nucleophile. The active-site Charge relay system is the histidine 210.

It belongs to the peptidase S54 family.

The protein localises to the cell membrane. The catalysed reaction is Cleaves type-1 transmembrane domains using a catalytic dyad composed of serine and histidine that are contributed by different transmembrane domains.. Functionally, rhomboid serine protease that catalyzes intramembrane proteolysis. Mediates quorum-sensing and the subsequent regulation of target genes via activation of the Tat protein export system. Catalyzes the proteolytic activation of TatA by removal of its N-terminal extension. In Providencia stuartii, this protein is Rhomboid protease AarA (aarA).